The primary structure comprises 344 residues: Nuclear distribution protein nudE homolog 1 (344 aa).

The interval 1–93 (MEDSGKTFGS…MQHSEGYRQI (93 aa)) is self-association. Positions 18-188 (WRDLAMTYKQ…ELAVQQKQDK (171 aa)) form a coiled coil. Basic and acidic residues predominate over residues 30 to 47 (ENTQEELREFQEGSREYE). Residues 30 to 65 (ENTQEELREFQEGSREYEAELETQLQQAETRNRDLL) form a disordered region. Residues 88–156 (EGYRQISALE…ERNAFLESEL (69 aa)) are interaction with PAFAH1B1. The interval 167-290 (QRLKDEARDL…QSPSRKSGPA (124 aa)) is interaction with CENPF. A disordered region spans residues 181–243 (AVQQKQDKPR…CGLGSPSSGT (63 aa)). Polar residues predominate over residues 208-230 (ATGSAPSTPITHQGSSSGLNTPE). The residue at position 211 (Ser-211) is a Phosphoserine. A phosphothreonine mark is found at Thr-215, Thr-228, Thr-243, and Thr-246. Cys-274 carries the S-palmitoyl cysteine; by ZDHHC2, ZDHHC3 and ZDHHC7 lipid modification. A disordered region spans residues 279-337 (YDQSPSRKSGPALGRGTKNRDGIDRRPGSTAVGDKGSGKRLEFAKPSSQLSSPALPSTQ). Ser-282 bears the Phosphoserine mark. Residues 296-305 (KNRDGIDRRP) show a composition bias toward basic and acidic residues. Positions 324-335 (PSSQLSSPALPS) are enriched in low complexity.

Belongs to the nudE family. As to quaternary structure, homodimer. Interacts with CNTRL, LIS1, dynein, SLMAP and TCP1. Interacts with CENPF, dynactin, tubulin gamma, PAFAH1B1, PCM1 and PCNT. Interacts with ZNF365. Interacts with GTP-bound RAB9A and RAB9B; the interaction leads to RAB9-dynein motor tethering. Interacts (via C-terminus) with MCRS1 (via C-terminus); phosphorylation of NDE1 inhibits the interaction. Post-translationally, phosphorylated in mitosis. Phosphorylation at Thr-246 is essential for the G2/M transition. As to expression, expressed in brain, heart, kidney, liver, lung, skeletal muscle, spleen and testis.

Its subcellular location is the cytoplasm. The protein resides in the cytoskeleton. It localises to the microtubule organizing center. It is found in the centrosome. The protein localises to the spindle. Its subcellular location is the chromosome. The protein resides in the centromere. It localises to the kinetochore. It is found in the cleavage furrow. The protein localises to the cytoplasmic vesicle membrane. Required for centrosome duplication and formation and function of the mitotic spindle. Essential for the development of the cerebral cortex. May regulate the production of neurons by controlling the orientation of the mitotic spindle during division of cortical neuronal progenitors of the proliferative ventricular zone of the brain. Orientation of the division plane perpendicular to the layers of the cortex gives rise to two proliferative neuronal progenitors whereas parallel orientation of the division plane yields one proliferative neuronal progenitor and a postmitotic neuron. A premature shift towards a neuronal fate within the progenitor population may result in an overall reduction in the final number of neurons and an increase in the number of neurons in the deeper layers of the cortex. Acts as a RAB9A/B effector that tethers RAB9-associated late endosomes to the dynein motor for their retrograde transport to the trans-Golgi network. This Rattus norvegicus (Rat) protein is Nuclear distribution protein nudE homolog 1.